Here is a 592-residue protein sequence, read N- to C-terminus: V-type ATP synthase alpha chain (592 aa).

232–239 serves as a coordination point for ATP; sequence GPFGAGKT.

Belongs to the ATPase alpha/beta chains family.

It catalyses the reaction ATP + H2O + 4 H(+)(in) = ADP + phosphate + 5 H(+)(out). Produces ATP from ADP in the presence of a proton gradient across the membrane. The V-type alpha chain is a catalytic subunit. The protein is V-type ATP synthase alpha chain of Clostridium botulinum (strain Alaska E43 / Type E3).